The sequence spans 149 residues: Calmodulin (149 aa).

Ala2 carries the post-translational modification N-acetylalanine. EF-hand domains follow at residues 8-43, 44-79, 81-116, and 117-149; these read EQIA…LGQN, PTEA…KMKD, DSEE…LGEK, and LTDE…MMAK. Residues Asp21, Asp23, Asp25, Cys27, Glu32, Asp57, Asp59, Asn61, Thr63, Glu68, Asp94, Asp96, Asp98, and Glu105 each contribute to the Ca(2+) site. Lys116 is modified (N6,N6,N6-trimethyllysine). Positions 130, 132, 134, 136, and 141 each coordinate Ca(2+).

The protein belongs to the calmodulin family.

Calmodulin mediates the control of a large number of enzymes, ion channels and other proteins by Ca(2+). Among the enzymes to be stimulated by the calmodulin-Ca(2+) complex are a number of protein kinases and phosphatases. The chain is Calmodulin from Triticum aestivum (Wheat).